We begin with the raw amino-acid sequence, 213 residues long: Validoxylamine A 7'-phosphate phosphatase (213 aa).

Catalysis depends on Asp-8, which acts as the Nucleophile. Asp-8 and Asp-10 together coordinate a divalent metal cation. Substrate-binding positions include 8 to 10 (DLD), 107 to 108 (TS), and Lys-140. Asp-10 serves as the catalytic Proton donor. Residue Asp-165 participates in a divalent metal cation binding.

Belongs to the HAD-like hydrolase superfamily. CbbY/CbbZ/Gph/YieH family. Mg(2+) serves as cofactor. It depends on Mn(2+) as a cofactor. The cofactor is Co(2+).

It carries out the reaction validoxylamine A 7'-phosphate + H2O = validoxylamine A + phosphate. Functionally, involved in the biosynthesis of the antifungal agent validamycin A. Catalyzes the dephosphorylation of validoxylamine A 7'-phosphate to yield validoxylamine A. VldH is also able to convert trehalose 6-phosphate to trehalose. The sequence is that of Validoxylamine A 7'-phosphate phosphatase from Streptomyces hygroscopicus subsp. limoneus.